A 290-amino-acid chain; its full sequence is Membrane protein insertase YidC (290 aa).

The N-terminal stretch at 1-19 (MKKKTLLPLFLGIMVFLAG) is a signal peptide. C20 is lipidated: N-palmitoyl cysteine. C20 carries S-diacylglycerol cysteine lipidation. Helical transmembrane passes span 56–76 (YGLA…PFML), 134–154 (MLGC…YFVL), 176–196 (PDIW…YVSS), 207–224 (GYMM…ISLS), and 229–251 (LGLY…NIYY). The segment at 270 to 290 (HNGGSNKKGKNTQVVSKKKKK) is disordered.

It belongs to the OXA1/ALB3/YidC family. Type 2 subfamily.

The protein localises to the cell membrane. Functionally, required for the insertion and/or proper folding and/or complex formation of integral membrane proteins into the membrane. Involved in integration of membrane proteins that insert both dependently and independently of the Sec translocase complex, as well as at least some lipoproteins. This chain is Membrane protein insertase YidC, found in Staphylococcus aureus (strain MRSA252).